The sequence spans 247 residues: HTH-type transcriptional regulator SarU (247 aa).

2 DNA-binding regions (H-T-H motif) span residues 53-76 and 178-201; these read LKEI…SLSK and LKDL…RLNN.

Belongs to the SarA family.

It localises to the cytoplasm. Functionally, positive regulator of RNAII and RNAIII in a cell density-dependent manner. It can contribute to the expression of virulence genes controlled by agr. May also regulate target genes via an agr-independent pathway. The chain is HTH-type transcriptional regulator SarU (sarU) from Staphylococcus aureus (strain COL).